Here is a 293-residue protein sequence, read N- to C-terminus: Release factor glutamine methyltransferase (293 aa).

S-adenosyl-L-methionine contacts are provided by residues Gly130–Gly134, Asp153, Trp182, and Asn199. Asn199–Tyr202 serves as a coordination point for substrate.

This sequence belongs to the protein N5-glutamine methyltransferase family. PrmC subfamily.

It carries out the reaction L-glutaminyl-[peptide chain release factor] + S-adenosyl-L-methionine = N(5)-methyl-L-glutaminyl-[peptide chain release factor] + S-adenosyl-L-homocysteine + H(+). Functionally, methylates the class 1 translation termination release factors RF1/PrfA and RF2/PrfB on the glutamine residue of the universally conserved GGQ motif. The chain is Release factor glutamine methyltransferase from Prochlorococcus marinus (strain SARG / CCMP1375 / SS120).